A 320-amino-acid polypeptide reads, in one-letter code: MKMINKLIVPVTASALLLGACGASATDSKENTLISSKAGDVTVADTMKKIGKDQIANASFTEMLNKILADKYKNKVNDKKIDEQIEKMQKQYGGKDKFKKALQQQGLTADKYKENLRTAAYHKELLSDKIKISDSEIKEDSKKASHILIKVKSKKSDKEGLDDKEAKQKAEEIQKEVSKDPSKFGEIAKKESMDTGSAKKDGELGYVLKGQTDKDFEKALFKLKDGEVSDVVKSSFGYHIIKADKPTDFNSEKQSLKEKLVDQKVQKNPKLLTDAYKDLLKEYDVDFKDRDIKSVVEDKILNPEKLKQGGAQGGQSGMSQ.

A signal peptide spans 1-20; sequence MKMINKLIVPVTASALLLGA. C21 carries the N-palmitoyl cysteine lipid modification. C21 is lipidated: S-diacylglycerol cysteine. A PpiC domain is found at 139-245; that stretch reads EDSKKASHIL…FGYHIIKADK (107 aa). The segment at 159-198 is disordered; that stretch reads EGLDDKEAKQKAEEIQKEVSKDPSKFGEIAKKESMDTGSA.

It belongs to the PrsA family.

It is found in the cell membrane. The catalysed reaction is [protein]-peptidylproline (omega=180) = [protein]-peptidylproline (omega=0). In terms of biological role, plays a major role in protein secretion by helping the post-translocational extracellular folding of several secreted proteins. The polypeptide is Foldase protein PrsA (Staphylococcus aureus (strain MRSA252)).